The chain runs to 162 residues: RNA pyrophosphohydrolase (162 aa).

In terms of domain architecture, Nudix hydrolase spans 11 to 155 (PYRPCVGIVL…KRAVYEEVVA (145 aa)). The Nudix box signature appears at 45-66 (GGIDEGEKPREAALRELWEETG).

The protein belongs to the Nudix hydrolase family. RppH subfamily. Requires a divalent metal cation as cofactor.

Its function is as follows. Accelerates the degradation of transcripts by removing pyrophosphate from the 5'-end of triphosphorylated RNA, leading to a more labile monophosphorylated state that can stimulate subsequent ribonuclease cleavage. The chain is RNA pyrophosphohydrolase from Cereibacter sphaeroides (strain ATCC 17023 / DSM 158 / JCM 6121 / CCUG 31486 / LMG 2827 / NBRC 12203 / NCIMB 8253 / ATH 2.4.1.) (Rhodobacter sphaeroides).